A 615-amino-acid polypeptide reads, in one-letter code: Elongation factor 4 (615 aa).

The tr-type G domain occupies 14-196 (AMIRNFCIIA…EIVRQVPAPV (183 aa)). GTP-binding positions include 26 to 31 (DHGKST) and 143 to 146 (NKID).

The protein belongs to the TRAFAC class translation factor GTPase superfamily. Classic translation factor GTPase family. LepA subfamily.

It localises to the cell membrane. The enzyme catalyses GTP + H2O = GDP + phosphate + H(+). Required for accurate and efficient protein synthesis under certain stress conditions. May act as a fidelity factor of the translation reaction, by catalyzing a one-codon backward translocation of tRNAs on improperly translocated ribosomes. Back-translocation proceeds from a post-translocation (POST) complex to a pre-translocation (PRE) complex, thus giving elongation factor G a second chance to translocate the tRNAs correctly. Binds to ribosomes in a GTP-dependent manner. In Frankia alni (strain DSM 45986 / CECT 9034 / ACN14a), this protein is Elongation factor 4.